The following is a 441-amino-acid chain: Protein kinase C and casein kinase substrate in neurons protein 1 (441 aa).

Phosphoserine occurs at positions 2 and 76. The 271-residue stretch at 10-280 (EEITDSFWEV…AIRGADAQED (271 aa)) folds into the F-BAR domain. Residues 23 to 272 (KRTVKRIDDG…HVYRELEQAI (250 aa)) adopt a coiled-coil conformation. At Thr-181 the chain carries Phosphothreonine. A disordered region spans residues 310-380 (AAKKEKQPKK…ANGGANPFED (71 aa)). Over residues 311–321 (AKKEKQPKKAE) the composition is skewed to basic and acidic residues. Over residues 326 to 348 (SNATGAVESTSQAGDRGSVSSYD) the composition is skewed to polar residues. Phosphoserine is present on residues Ser-343, Ser-345, Ser-346, Ser-358, and Ser-362. In terms of domain architecture, SH3 spans 382 to 441 (AKGVRVRALYDYDGQEQDELSFKAGDELTKLGEEDEQGWCRGRLDSGQLGLYPANYVEAI). Tyr-391 carries the phosphotyrosine modification. Residues Ser-402 and Ser-427 each carry the phosphoserine modification.

This sequence belongs to the PACSIN family. In terms of assembly, homodimer. May form heterooligomers with other PACSINs. Interacts with MAPT. Interacts with TRPV4. Interacts (via SH3 domain) with SYNJ1 and WASL. Interacts (via SH3 domain) with DNM1; the interaction is reduced by DNM1 phosphorylation. Interacts with DNM2 and DNM3. Interacts with both COBL and DBNL. Identified in a complex composed of COBL, PACSIN1 and WASL. Interacts with EHD1 and EHD3. In terms of processing, phosphorylated by casein kinase 2 (CK2) and protein kinase C (PKC). In terms of tissue distribution, highly expressed in brain (at protein level).

Its subcellular location is the cytoplasm. It is found in the cell projection. The protein resides in the synapse. It localises to the synaptosome. The protein localises to the ruffle membrane. Its subcellular location is the membrane. It is found in the cytoplasmic vesicle membrane. The protein resides in the cytosol. It localises to the cell membrane. Its function is as follows. Binds to membranes via its F-BAR domain and mediates membrane tubulation. Plays a role in the reorganization of the microtubule cytoskeleton via its interaction with MAPT; this decreases microtubule stability and inhibits MAPT-induced microtubule polymerization. Plays a role in cellular transport processes by recruiting DNM1, DNM2 and DNM3 to membranes. Plays a role in the reorganization of the actin cytoskeleton and in neuron morphogenesis via its interaction with COBL and WASL, and by recruiting COBL to the cell cortex. Plays a role in the regulation of neurite formation, neurite branching and the regulation of neurite length. Required for normal synaptic vesicle endocytosis; this process retrieves previously released neurotransmitters to accommodate multiple cycles of neurotransmission. Required for normal excitatory and inhibitory synaptic transmission. This is Protein kinase C and casein kinase substrate in neurons protein 1 (Pacsin1) from Rattus norvegicus (Rat).